Consider the following 440-residue polypeptide: ATP-dependent protease ATPase subunit HslU (440 aa).

ATP-binding positions include I18, 60-65 (GVGKTE), D253, E318, and R390.

It belongs to the ClpX chaperone family. HslU subfamily. A double ring-shaped homohexamer of HslV is capped on each side by a ring-shaped HslU homohexamer. The assembly of the HslU/HslV complex is dependent on binding of ATP.

The protein localises to the cytoplasm. Its function is as follows. ATPase subunit of a proteasome-like degradation complex; this subunit has chaperone activity. The binding of ATP and its subsequent hydrolysis by HslU are essential for unfolding of protein substrates subsequently hydrolyzed by HslV. HslU recognizes the N-terminal part of its protein substrates and unfolds these before they are guided to HslV for hydrolysis. This is ATP-dependent protease ATPase subunit HslU from Shewanella oneidensis (strain ATCC 700550 / JCM 31522 / CIP 106686 / LMG 19005 / NCIMB 14063 / MR-1).